Consider the following 483-residue polypeptide: Kynureninase 1 (483 aa).

Residues Leu-147, Thr-148, 175–178 (FPSD), Ser-232, Asp-261, His-264, and Tyr-286 each bind pyridoxal 5'-phosphate. The residue at position 287 (Lys-287) is an N6-(pyridoxal phosphate)lysine. 2 residues coordinate pyridoxal 5'-phosphate: Trp-326 and Asn-354.

Belongs to the kynureninase family. As to quaternary structure, homodimer. The cofactor is pyridoxal 5'-phosphate.

The protein localises to the cytoplasm. It carries out the reaction L-kynurenine + H2O = anthranilate + L-alanine + H(+). The catalysed reaction is 3-hydroxy-L-kynurenine + H2O = 3-hydroxyanthranilate + L-alanine + H(+). It participates in amino-acid degradation; L-kynurenine degradation; L-alanine and anthranilate from L-kynurenine: step 1/1. Its pathway is cofactor biosynthesis; NAD(+) biosynthesis; quinolinate from L-kynurenine: step 2/3. Its function is as follows. Catalyzes the cleavage of L-kynurenine (L-Kyn) and L-3-hydroxykynurenine (L-3OHKyn) into anthranilic acid (AA) and 3-hydroxyanthranilic acid (3-OHAA), respectively. The protein is Kynureninase 1 (bna5-1) of Aspergillus terreus (strain NIH 2624 / FGSC A1156).